A 459-amino-acid polypeptide reads, in one-letter code: tRNA modification GTPase MnmE (459 aa).

Residues Arg-22, Glu-85, and Arg-124 each contribute to the (6S)-5-formyl-5,6,7,8-tetrahydrofolate site. One can recognise a TrmE-type G domain in the interval 221 to 380 (GLSTVIVGKP…LEIQIRDLFF (160 aa)). Asn-231 serves as a coordination point for K(+). GTP contacts are provided by residues 231-236 (NVGKSS), 250-256 (TEVAGTT), and 275-278 (DTAG). Ser-235 serves as a coordination point for Mg(2+). K(+) is bound by residues Thr-250, Val-252, and Thr-255. Thr-256 serves as a coordination point for Mg(2+). Residue Lys-459 participates in (6S)-5-formyl-5,6,7,8-tetrahydrofolate binding.

Belongs to the TRAFAC class TrmE-Era-EngA-EngB-Septin-like GTPase superfamily. TrmE GTPase family. As to quaternary structure, homodimer. Heterotetramer of two MnmE and two MnmG subunits. The cofactor is K(+).

Its subcellular location is the cytoplasm. Exhibits a very high intrinsic GTPase hydrolysis rate. Involved in the addition of a carboxymethylaminomethyl (cmnm) group at the wobble position (U34) of certain tRNAs, forming tRNA-cmnm(5)s(2)U34. The polypeptide is tRNA modification GTPase MnmE (Staphylococcus aureus (strain Mu3 / ATCC 700698)).